Here is a 448-residue protein sequence, read N- to C-terminus: tRNA-2-methylthio-N(6)-dimethylallyladenosine synthase (448 aa).

Residues 2 to 120 (KKYRIIVFGC…LPELIGKVIE (119 aa)) form the MTTase N-terminal domain. Positions 11, 47, 81, 158, 162, and 165 each coordinate [4Fe-4S] cluster. The Radical SAM core domain occupies 144–374 (RKEGVRAWVT…IKLQNKISLE (231 aa)). The TRAM domain occupies 377-440 (EEEVGQTQEV…LAHLTGILSY (64 aa)).

It belongs to the methylthiotransferase family. MiaB subfamily. Monomer. Requires [4Fe-4S] cluster as cofactor.

The protein localises to the cytoplasm. It catalyses the reaction N(6)-dimethylallyladenosine(37) in tRNA + (sulfur carrier)-SH + AH2 + 2 S-adenosyl-L-methionine = 2-methylsulfanyl-N(6)-dimethylallyladenosine(37) in tRNA + (sulfur carrier)-H + 5'-deoxyadenosine + L-methionine + A + S-adenosyl-L-homocysteine + 2 H(+). Its function is as follows. Catalyzes the methylthiolation of N6-(dimethylallyl)adenosine (i(6)A), leading to the formation of 2-methylthio-N6-(dimethylallyl)adenosine (ms(2)i(6)A) at position 37 in tRNAs that read codons beginning with uridine. The protein is tRNA-2-methylthio-N(6)-dimethylallyladenosine synthase of Pelotomaculum thermopropionicum (strain DSM 13744 / JCM 10971 / SI).